A 628-amino-acid chain; its full sequence is 2-oxoacid:ferredoxin oxidoreductase 2, subunit alpha (628 aa).

The short motif at 254–258 (YPITP) is the YPITP motif element. Substrate is bound by residues Thr-257 and Arg-344.

In terms of assembly, heterodimer composed of an alpha and a beta subunit.

The enzyme catalyses a 2-oxocarboxylate + 2 oxidized [2Fe-2S]-[ferredoxin] + CoA = an acyl-CoA + 2 reduced [2Fe-2S]-[ferredoxin] + CO2 + H(+). Its function is as follows. Catalyzes the coenzyme A-dependent oxidative decarboxylation of different 2-oxoacids such as 2-oxoglutarate, pyruvate and 2-oxobutyrate to form their CoA derivatives. The chain is 2-oxoacid:ferredoxin oxidoreductase 2, subunit alpha from Sulfurisphaera tokodaii (strain DSM 16993 / JCM 10545 / NBRC 100140 / 7) (Sulfolobus tokodaii).